Here is a 272-residue protein sequence, read N- to C-terminus: Merozoite surface protein 2 (272 aa).

The first 20 residues, 1-20 (MKVIKTLSIINFFIFVTFNI), serve as a signal peptide directing secretion. N-linked (GlcNAc...) asparagine glycosylation is found at asparagine 22 and asparagine 36. The segment at 44–198 (AESKPSTGAG…EQTESPELQS (155 aa)) is polymorphic region. The tract at residues 45–233 (ESKPSTGAGG…DSQKECTDGN (189 aa)) is disordered. The span at 51-82 (GAGGSAGGSAGGSAGGSAGGSAGGSAGSGDGN) shows a compositional bias: gly residues. 6 repeat units span residues 53-56 (GGSA), 57-60 (GGSA), 61-64 (GGSA), 65-68 (GGSA), 69-72 (GGSA), and 73-76 (GGSA). Residues 53–76 (GGSAGGSAGGSAGGSAGGSAGGSA) form a 6 X 4 AA tandem repeats of G-G-S-A region. Residues 83-119 (GADAEGSSSTPATTTTTKTTTTTTTTNDAEASTSTSS) show a composition bias toward low complexity. Residues 122 to 137 (PNHKNAETNPKGKGEV) show a composition bias toward basic and acidic residues. Polar residues-rich tracts occupy residues 139-165 (EPNQANKETQNNSNVQQDSQTKSNVPP) and 172-200 (KSPTAQPEQAENSAPTAEQTESPELQSAP). N-linked (GlcNAc...) asparagine glycosylation is present at asparagine 149. Asparagine 221 is a glycosylation site (N-linked (GlcNAc...) asparagine). Cysteines 229 and 237 form a disulfide. N-linked (GlcNAc...) asparagine glycosylation is found at asparagine 245 and asparagine 246. Residue asparagine 246 is the site of GPI-anchor amidated asparagine attachment. Positions 247 to 272 (SSNIASINKFVVLISATLVLSFAIFI) are cleaved as a propeptide — removed in mature form.

It is found in the cell membrane. In terms of biological role, may play a role in the merozoite attachment to the erythrocyte. This Plasmodium falciparum (isolate 3D7) protein is Merozoite surface protein 2.